We begin with the raw amino-acid sequence, 229 residues long: Matrix protein (229 aa).

Positions 2 to 4 match the dynamin binding motif; sequence KSI. The tract at residues 11 to 36 is disordered; the sequence is AKKEKKREKKSNHGSHSMEWESPPSY. Basic residues predominate over residues 13–23; the sequence is KEKKREKKSNH. The PPXY motif motif lies at 33 to 36; that stretch reads PPSY. A PTAP/PSAP motif motif is present at residues 42-45; that stretch reads PSAP.

Belongs to the vesiculoviruses matrix protein family. As to quaternary structure, homomultimer. Interacts with viral nucleocapsid; this interaction contributes to the virion assembly. Interacts with the viral envelope glycoprotein; this interaction contributes to the virion assembly. Interacts with host RAE1-NUP98 complex. Interacts with host NEDD4 and TSG101. Interacts with host dynamin. Interacts with host NDUFAF4; the interaction inhibits viral propagation and is independent of interferon activation. Interacts with host GTF2H5; the interaction may inhibit host transcription. Post-translationally, phosphorylated by host.

The protein localises to the virion. It localises to the host endomembrane system. Its subcellular location is the host nucleus membrane. The protein resides in the host nucleus. It is found in the host cytoplasm. Its function is as follows. Forms a double layer around the helical nucleocapsid, the inner matrix layer binding to the N helix and the outer matrix layer binding to the envelope glycoprotein. Plays a major role in assembly and budding of virion, by recruiting cellular partners of the ESCRT complexes that play a key role in releasing the budding particle from the host membrane. Condensates the ribonucleocapsid core during virus assembly. Inhibits the host mRNA nuclear export thereby inducing the shut off of cellular transcription and preventing the interferon signaling and the establishment of antiviral state in infected cells. This shutoff presumably inhibits interferon signaling and thus establishment of antiviral state in virus infected cells. Induces cell-rounding, cytoskeleton disorganization and apoptosis in infected cell. Inhibits host transcription, possibly through interaction with host DNA repair factor IIH/TFIIH GTF2H5 subunit. This is Matrix protein (M) from Piry virus (PIRYV).